A 153-amino-acid chain; its full sequence is Peptidyl-prolyl cis-trans isomerase FKBP15-1 (153 aa).

An N-terminal signal peptide occupies residues Met1–Ala25. Positions Gly52–Asn140 constitute a PPIase FKBP-type domain. The Prevents secretion from ER motif lies at Lys150–Leu153.

The protein belongs to the FKBP-type PPIase family.

The protein localises to the endoplasmic reticulum lumen. It carries out the reaction [protein]-peptidylproline (omega=180) = [protein]-peptidylproline (omega=0). Functionally, PPIases accelerate the folding of proteins. It catalyzes the cis-trans isomerization of proline imidic peptide bonds in oligopeptides. The polypeptide is Peptidyl-prolyl cis-trans isomerase FKBP15-1 (FKBP15-1) (Arabidopsis thaliana (Mouse-ear cress)).